Reading from the N-terminus, the 55-residue chain is Large ribosomal subunit protein bL33 (55 aa).

Belongs to the bacterial ribosomal protein bL33 family.

The chain is Large ribosomal subunit protein bL33 from Bradyrhizobium diazoefficiens (strain JCM 10833 / BCRC 13528 / IAM 13628 / NBRC 14792 / USDA 110).